Consider the following 559-residue polypeptide: Polypeptide N-acetylgalactosaminyltransferase 1 (559 aa).

Topologically, residues 1–8 are cytoplasmic; it reads MRKFAYCK. The helical; Signal-anchor for type II membrane protein transmembrane segment at 9-28 threads the bilayer; sequence VVLATSLIWVLLDMFLLLYF. Over 29–559 the chain is Lumenal; it reads SECNKCDEKK…LRNVTLPEIF (531 aa). Residues 45–65 are disordered; that stretch reads GDVLEPVQKPHEGPGEMGKPV. The N-linked (GlcNAc...) asparagine glycan is linked to asparagine 95. Intrachain disulfides connect cysteine 106-cysteine 339, cysteine 330-cysteine 408, cysteine 442-cysteine 459, cysteine 482-cysteine 497, and cysteine 523-cysteine 540. Residues 115-225 are catalytic subdomain A; the sequence is LPTTSVVIVF…VGWLEPLLAR (111 aa). 2 residues coordinate substrate: aspartate 156 and arginine 186. Mn(2+)-binding residues include aspartate 209 and histidine 211. Residues 285–347 form a catalytic subdomain B region; that stretch reads PVRTPTMAGG…TCSHVGHVFR (63 aa). Tryptophan 316 serves as a coordination point for substrate. Histidine 344 provides a ligand contact to Mn(2+). Arginine 347 and tyrosine 352 together coordinate substrate. The region spanning 429–551 is the Ricin B-type lectin domain; sequence FSLGEIRNVE…GSRSQQWLLR (123 aa). An N-linked (GlcNAc...) asparagine glycan is attached at asparagine 552.

It belongs to the glycosyltransferase 2 family. GalNAc-T subfamily. Mn(2+) serves as cofactor. In terms of tissue distribution, widely expressed. Expressed in all tissues tested.

The protein localises to the golgi apparatus. It localises to the golgi stack membrane. Its subcellular location is the secreted. It carries out the reaction L-seryl-[protein] + UDP-N-acetyl-alpha-D-galactosamine = a 3-O-[N-acetyl-alpha-D-galactosaminyl]-L-seryl-[protein] + UDP + H(+). The enzyme catalyses L-threonyl-[protein] + UDP-N-acetyl-alpha-D-galactosamine = a 3-O-[N-acetyl-alpha-D-galactosaminyl]-L-threonyl-[protein] + UDP + H(+). The protein operates within protein modification; protein glycosylation. Functionally, catalyzes the initial reaction in O-linked oligosaccharide biosynthesis, the transfer of an N-acetyl-D-galactosamine residue to a serine or threonine residue on the protein receptor. Has a broad spectrum of substrates such as apomucin-, MUC5AC-, MUC1- and MUC2-derived peptides. The protein is Polypeptide N-acetylgalactosaminyltransferase 1 of Homo sapiens (Human).